Here is a 103-residue protein sequence, read N- to C-terminus: uncharacterized protein (103 aa).

The first 13 residues, 1 to 13 (MLLSSIVSFVADA), serve as a signal peptide directing secretion. Residue Asn-67 is glycosylated (N-linked (GlcNAc...) asparagine). The interval 73–103 (LSSDSNRNIIDNSNNNQHPSSSSTSTSWKKF) is disordered.

The protein resides in the secreted. This is an uncharacterized protein from Dictyostelium discoideum (Social amoeba).